Here is a 677-residue protein sequence, read N- to C-terminus: DNA ligase (677 aa).

NAD(+) is bound by residues 34–38 (DAQYD), 84–85 (SL), and Glu118. Lys120 acts as the N6-AMP-lysine intermediate in catalysis. NAD(+)-binding residues include Arg141, Glu176, Lys283, and Lys307. Cys403, Cys406, Cys421, and Cys427 together coordinate Zn(2+). Residues 594–677 (ETASPISGKT…DLLKTVSNSE (84 aa)) form the BRCT domain.

This sequence belongs to the NAD-dependent DNA ligase family. LigA subfamily. It depends on Mg(2+) as a cofactor. Mn(2+) is required as a cofactor.

The enzyme catalyses NAD(+) + (deoxyribonucleotide)n-3'-hydroxyl + 5'-phospho-(deoxyribonucleotide)m = (deoxyribonucleotide)n+m + AMP + beta-nicotinamide D-nucleotide.. Its function is as follows. DNA ligase that catalyzes the formation of phosphodiester linkages between 5'-phosphoryl and 3'-hydroxyl groups in double-stranded DNA using NAD as a coenzyme and as the energy source for the reaction. It is essential for DNA replication and repair of damaged DNA. The protein is DNA ligase of Anaplasma phagocytophilum (strain HZ).